We begin with the raw amino-acid sequence, 123 residues long: Dihydroneopterin triphosphate 2'-epimerase (123 aa).

The protein belongs to the DHNA family. In terms of assembly, homooctamer. Dimer of tetramers.

The enzyme catalyses 7,8-dihydroneopterin 3'-triphosphate = 7,8-dihydromonapterin 3'-triphosphate. Its function is as follows. Catalyzes the epimerization of carbon 2' of the side chain of 7,8-dihydroneopterin triphosphate (H2NTP) to form 7,8-dihydromonapterin triphosphate (H2MTP). Is required for tetrahydromonapterin biosynthesis. The chain is Dihydroneopterin triphosphate 2'-epimerase from Pseudomonas aeruginosa (strain ATCC 15692 / DSM 22644 / CIP 104116 / JCM 14847 / LMG 12228 / 1C / PRS 101 / PAO1).